Reading from the N-terminus, the 102-residue chain is Small ribosomal subunit protein uS10 (102 aa).

It belongs to the universal ribosomal protein uS10 family. Part of the 30S ribosomal subunit.

Functionally, involved in the binding of tRNA to the ribosomes. This chain is Small ribosomal subunit protein uS10, found in Thermosipho melanesiensis (strain DSM 12029 / CIP 104789 / BI429).